Consider the following 469-residue polypeptide: Arginine biosynthesis bifunctional protein ArgJ, chloroplastic (469 aa).

Substrate is bound by residues Thr213, Lys239, Thr250, Glu337, Asn464, and Thr469. Catalysis depends on Thr250, which acts as the Nucleophile.

Belongs to the ArgJ family. In terms of assembly, heterodimer of an alpha and a beta chain.

Its subcellular location is the plastid. It is found in the chloroplast. The enzyme catalyses N(2)-acetyl-L-ornithine + L-glutamate = N-acetyl-L-glutamate + L-ornithine. The catalysed reaction is L-glutamate + acetyl-CoA = N-acetyl-L-glutamate + CoA + H(+). Its pathway is amino-acid biosynthesis; L-arginine biosynthesis; L-ornithine and N-acetyl-L-glutamate from L-glutamate and N(2)-acetyl-L-ornithine (cyclic): step 1/1. It participates in amino-acid biosynthesis; L-arginine biosynthesis; N(2)-acetyl-L-ornithine from L-glutamate: step 1/4. Its function is as follows. Catalyzes two activities which are involved in the cyclic version of arginine biosynthesis: the synthesis of acetylglutamate from glutamate and acetyl-CoA, and of ornithine by transacetylation between acetylornithine and glutamate. The polypeptide is Arginine biosynthesis bifunctional protein ArgJ, chloroplastic (Ricinus communis (Castor bean)).